The following is a 361-amino-acid chain: UDP-N-acetylglucosamine--N-acetylmuramyl-(pentapeptide) pyrophosphoryl-undecaprenol N-acetylglucosamine transferase (361 aa).

UDP-N-acetyl-alpha-D-glucosamine contacts are provided by residues 11-13, asparagine 124, arginine 162, serine 193, and glutamine 292; that span reads TGG.

Belongs to the glycosyltransferase 28 family. MurG subfamily.

It is found in the cell inner membrane. The enzyme catalyses di-trans,octa-cis-undecaprenyl diphospho-N-acetyl-alpha-D-muramoyl-L-alanyl-D-glutamyl-meso-2,6-diaminopimeloyl-D-alanyl-D-alanine + UDP-N-acetyl-alpha-D-glucosamine = di-trans,octa-cis-undecaprenyl diphospho-[N-acetyl-alpha-D-glucosaminyl-(1-&gt;4)]-N-acetyl-alpha-D-muramoyl-L-alanyl-D-glutamyl-meso-2,6-diaminopimeloyl-D-alanyl-D-alanine + UDP + H(+). Its pathway is cell wall biogenesis; peptidoglycan biosynthesis. In terms of biological role, cell wall formation. Catalyzes the transfer of a GlcNAc subunit on undecaprenyl-pyrophosphoryl-MurNAc-pentapeptide (lipid intermediate I) to form undecaprenyl-pyrophosphoryl-MurNAc-(pentapeptide)GlcNAc (lipid intermediate II). This is UDP-N-acetylglucosamine--N-acetylmuramyl-(pentapeptide) pyrophosphoryl-undecaprenol N-acetylglucosamine transferase from Elusimicrobium minutum (strain Pei191).